Here is a 479-residue protein sequence, read N- to C-terminus: NADH-quinone oxidoreductase subunit N 2 (479 aa).

Transmembrane regions (helical) follow at residues 4-24, 43-63, 67-87, 99-119, 121-141, 159-179, 201-221, 239-259, 267-287, 294-314, 318-338, 364-384, 401-421, and 444-464; these read FVSFLPELVLLAGALALFVVT, GVLVAALATVNHSAVLFSGAY, AFSQLLKIAIAFGYLCVGILS, PEYFLFLALSMTGLLALVSSI, VITLIIALELSSFPLYLMVAM, IMFGIAANGVMFFGFGYLYGL, AVTGLALTLAGFLYKLAVFPF, LIASLPKLGAVAVLVRFVSLA, ATLLTCLAIASMVYGNLIALV, LLGFSGIAHAGYVMVGFVAMD, FASALYYIAGYMLMVLACFVV, LAVTLIVGVFALAGVPPFVGF, ALVVLTVINSAIAIYYYLQIV, and ALCVLLIVAITLLGVAPAFTI.

Belongs to the complex I subunit 2 family. NDH-1 is composed of 14 different subunits. Subunits NuoA, H, J, K, L, M, N constitute the membrane sector of the complex.

It localises to the cell inner membrane. The enzyme catalyses a quinone + NADH + 5 H(+)(in) = a quinol + NAD(+) + 4 H(+)(out). NDH-1 shuttles electrons from NADH, via FMN and iron-sulfur (Fe-S) centers, to quinones in the respiratory chain. The immediate electron acceptor for the enzyme in this species is believed to be ubiquinone. Couples the redox reaction to proton translocation (for every two electrons transferred, four hydrogen ions are translocated across the cytoplasmic membrane), and thus conserves the redox energy in a proton gradient. This Opitutus terrae (strain DSM 11246 / JCM 15787 / PB90-1) protein is NADH-quinone oxidoreductase subunit N 2.